Consider the following 675-residue polypeptide: Potassium-transporting ATPase ATP-binding subunit 2 (675 aa).

4 helical membrane passes run 34–54, 65–85, 216–236, and 245–265; these read IMFV…FPDI, LITI…SEAF, IALF…IVTL, and LILP…TTIG. Residue D304 is the 4-aspartylphosphate intermediate of the active site. Residues D341, E345, 372-379, and K390 contribute to the ATP site; that span reads FTAETRMS. 2 residues coordinate Mg(2+): D513 and D517. 3 consecutive transmembrane segments (helical) span residues 569 to 591, 611 to 631, and 644 to 664; these read ALTT…ALMM, AIIS…PIAM, and IFIN…FLGI.

The protein belongs to the cation transport ATPase (P-type) (TC 3.A.3) family. Type IA subfamily. In terms of assembly, the system is composed of three essential subunits: KdpA, KdpB and KdpC.

It is found in the cell membrane. The enzyme catalyses K(+)(out) + ATP + H2O = K(+)(in) + ADP + phosphate + H(+). Part of the high-affinity ATP-driven potassium transport (or Kdp) system, which catalyzes the hydrolysis of ATP coupled with the electrogenic transport of potassium into the cytoplasm. This subunit is responsible for energy coupling to the transport system and for the release of the potassium ions to the cytoplasm. The sequence is that of Potassium-transporting ATPase ATP-binding subunit 2 from Staphylococcus aureus (strain Mu50 / ATCC 700699).